A 162-amino-acid polypeptide reads, in one-letter code: HTH-type transcriptional regulator IscR (162 aa).

Residues 2–131 enclose the HTH rrf2-type domain; sequence RLTSKGRYAV…NNITLGELVN (130 aa). A DNA-binding region (H-T-H motif) is located at residues 28–51; sequence LADISERQGISLSYLEQLFSRLRK. [2Fe-2S] cluster contacts are provided by Cys92, Cys98, and Cys104. Residues 141–162 form a disordered region; that stretch reads RQHNEAHRPTRAQDAIDVKLRA.

[2Fe-2S] cluster is required as a cofactor.

Regulates the transcription of several operons and genes involved in the biogenesis of Fe-S clusters and Fe-S-containing proteins. The chain is HTH-type transcriptional regulator IscR from Cronobacter sakazakii (strain ATCC BAA-894) (Enterobacter sakazakii).